We begin with the raw amino-acid sequence, 172 residues long: uncharacterized protein (172 aa).

Residues 10-122 (KESKVVKTSR…FLTFVALDSN (113 aa)) enclose the HotDog ACOT-type domain. Residues 148–172 (RANERKNRKRHSQALANALGTDKPW) form a disordered region.

The protein belongs to the acyl coenzyme A hydrolase family.

This is an uncharacterized protein from Bacillus subtilis (strain 168).